The following is a 96-amino-acid chain: Co-chaperonin GroES (96 aa).

Belongs to the GroES chaperonin family. In terms of assembly, heptamer of 7 subunits arranged in a ring. Interacts with the chaperonin GroEL.

Its subcellular location is the cytoplasm. Together with the chaperonin GroEL, plays an essential role in assisting protein folding. The GroEL-GroES system forms a nano-cage that allows encapsulation of the non-native substrate proteins and provides a physical environment optimized to promote and accelerate protein folding. GroES binds to the apical surface of the GroEL ring, thereby capping the opening of the GroEL channel. This Haemophilus influenzae (strain PittEE) protein is Co-chaperonin GroES.